Reading from the N-terminus, the 166-residue chain is 2S seed storage protein 4 (166 aa).

Residues 1-21 form the signal peptide; sequence MANKLFLVCAALALCFILTNA. 2 propeptides span residues 22–37 and 73–88; these read SVYR…DASN and GPSL…DIEN.

The protein belongs to the 2S seed storage albumins family. As to quaternary structure, the mature protein consists of a small and a large chain linked by disulfide bonds.

This is a 2S seed storage protein. The sequence is that of 2S seed storage protein 4 (AT2S4) from Arabidopsis thaliana (Mouse-ear cress).